Reading from the N-terminus, the 445-residue chain is StAR-related lipid transfer protein 3 (445 aa).

The Cytoplasmic segment spans residues 1–51 (MSKLPGELARDLECSLPAVASLGSSLSHSQSLSSHLLPPPEKRRAISDVRR). Residues 46 to 217 (ISDVRRTFCL…YSPPESFAGS (172 aa)) form the MENTAL domain. The helical transmembrane segment at 52–72 (TFCLFVTFDLLFISLLWIIEL) threads the bilayer. Over 73–94 (NTNTGIRKNLEQEIIQYNFKTS) the chain is Extracellular. Residues 95–115 (FFDIFVLAFFRFSGLLLGYAV) traverse the membrane as a helical segment. The Cytoplasmic portion of the chain corresponds to 116 to 120 (LRLQH). The chain crosses the membrane as a helical span at residues 121 to 141 (WWVIAVTTLVSSAFLIVKVIL). Residues 142 to 148 (SELLSKG) lie on the Extracellular side of the membrane. Residues 149–169 (AFGYLLPIVSFVLAWLETWFL) traverse the membrane as a helical segment. Over 170 to 445 (DFKVLPQEAE…QRISELGARA (276 aa)) the chain is Cytoplasmic. 2 short sequence motifs (FFAT) span residues 206-212 (QFYSPPE) and 207-212 (FYSPPE). 3 positions are modified to phosphoserine: S209, S217, and S221. Residues 248-443 (VVDQILAQEE…LRQRISELGA (196 aa)) enclose the START domain.

Belongs to the STARD3 family. In terms of assembly, homodimer. Interacts (via the MENTAL domain) with STARD3NL. Interacts (via phosphorylated FFAT motif) with VAPA (via MSP domain). Interacts (via phosphorylated FFAT motif) with VAPB (via MSP domain). Interacts (via phosphorylated FFAT motif) with MOSPD2 (via MSP domain); this interaction allows enrichment of MOSPD2 around endosomes. Phosphorylation at Ser-209 is necessary and sufficient for the direct interaction of the phosphorylated FFAT motif with the MSP domain of MOSPD2, VAPA and VAPB and allows the tethering of two membranes that participates in the formation of ER-endosome contacts. Phosphorylation of the FFAT motif leads to conformation changes. Additional phosphorylations around the core FFAT motif (QFYSPPE) are not essential but strengthen the interaction with MOSPD2, VAPA and VAPB. Phosphorylation at Ser-209 of FFAT motif drives membrane tethering between the endoplasmic reticulum and late endosomes via interaction with VAPA and VAPB that in turn allows the efficient transport of sterol mediated by the START domain. Present in retina. Localizes to all neurons of macular retina and especially cone inner segments and axons (at protein level).

It localises to the late endosome membrane. It catalyses the reaction cholesterol(in) = cholesterol(out). Sterol-binding protein that mediates cholesterol transport from the endoplasmic reticulum to endosomes. The sterol transport mechanism is triggered by phosphorylation of FFAT motif that leads to membrane tethering between the endoplasmic reticulum and late endosomes via interaction with VAPA and VAPB. Acts as a lipid transfer protein that redirects sterol to the endosome at the expense of the cell membrane and favors membrane formation inside endosomes. May also mediate cholesterol transport between other membranes, such as mitochondria membrane or cell membrane. However, such results need additional experimental evidences; probably mainly mediates cholesterol transport from the endoplasmic reticulum to endosomes. Does not activate transcriptional cholesterol sensing. Able to bind other lipids, such as lutein, a xanthophyll carotenoids that form the macular pigment of the retina. Able to bind other lipids, such as lutein, a xanthophyll carotenoids that form the macular pigment of the retina. This Macaca mulatta (Rhesus macaque) protein is StAR-related lipid transfer protein 3.